The sequence spans 271 residues: Phosphatidylglycerol--prolipoprotein diacylglyceryl transferase (271 aa).

A run of 7 helical transmembrane segments spans residues 10-30 (VALAIGPLKIHWYGLMYLVGI), 56-76 (LVFWLSMGVIVGGRLGYVLFY), 92-112 (WKGGMSFHGGFIGVMLAALWF), 120-140 (FFQLMDFVAPMVPIGLGAGRI), 174-194 (PSQLYQFALEGVALFLILWLF), 202-222 (MAVSGMFALFYGIFRFIVEFV), and 237-257 (LTMGQVLCVPMIIGGLFLIWL). R139 is a binding site for a 1,2-diacyl-sn-glycero-3-phospho-(1'-sn-glycerol).

This sequence belongs to the Lgt family.

The protein resides in the cell inner membrane. The enzyme catalyses L-cysteinyl-[prolipoprotein] + a 1,2-diacyl-sn-glycero-3-phospho-(1'-sn-glycerol) = an S-1,2-diacyl-sn-glyceryl-L-cysteinyl-[prolipoprotein] + sn-glycerol 1-phosphate + H(+). It functions in the pathway protein modification; lipoprotein biosynthesis (diacylglyceryl transfer). Its function is as follows. Catalyzes the transfer of the diacylglyceryl group from phosphatidylglycerol to the sulfhydryl group of the N-terminal cysteine of a prolipoprotein, the first step in the formation of mature lipoproteins. In Pseudomonas fluorescens (strain Pf0-1), this protein is Phosphatidylglycerol--prolipoprotein diacylglyceryl transferase.